The following is a 387-amino-acid chain: Queuine tRNA-ribosyltransferase (387 aa).

The Proton acceptor role is filled by Asp-102. Residues 102–106, Asp-156, Gln-205, and Gly-232 contribute to the substrate site; that span reads DSGGF. The RNA binding stretch occupies residues 263 to 269; sequence GVGTPED. The Nucleophile role is filled by Asp-282. Positions 287 to 291 are RNA binding; important for wobble base 34 recognition; that stretch reads TRNAR. Zn(2+)-binding residues include Cys-320, Cys-322, Cys-325, and His-351.

Belongs to the queuine tRNA-ribosyltransferase family. As to quaternary structure, homodimer. Within each dimer, one monomer is responsible for RNA recognition and catalysis, while the other monomer binds to the replacement base PreQ1. It depends on Zn(2+) as a cofactor.

It carries out the reaction 7-aminomethyl-7-carbaguanine + guanosine(34) in tRNA = 7-aminomethyl-7-carbaguanosine(34) in tRNA + guanine. It functions in the pathway tRNA modification; tRNA-queuosine biosynthesis. Its function is as follows. Catalyzes the base-exchange of a guanine (G) residue with the queuine precursor 7-aminomethyl-7-deazaguanine (PreQ1) at position 34 (anticodon wobble position) in tRNAs with GU(N) anticodons (tRNA-Asp, -Asn, -His and -Tyr). Catalysis occurs through a double-displacement mechanism. The nucleophile active site attacks the C1' of nucleotide 34 to detach the guanine base from the RNA, forming a covalent enzyme-RNA intermediate. The proton acceptor active site deprotonates the incoming PreQ1, allowing a nucleophilic attack on the C1' of the ribose to form the product. After dissociation, two additional enzymatic reactions on the tRNA convert PreQ1 to queuine (Q), resulting in the hypermodified nucleoside queuosine (7-(((4,5-cis-dihydroxy-2-cyclopenten-1-yl)amino)methyl)-7-deazaguanosine). The polypeptide is Queuine tRNA-ribosyltransferase (Polaromonas naphthalenivorans (strain CJ2)).